We begin with the raw amino-acid sequence, 433 residues long: Adenylosuccinate synthetase (433 aa).

GTP contacts are provided by residues 11–17 (GDEGKGK) and 39–41 (GHT). Residue D12 is the Proton acceptor of the active site. Mg(2+)-binding residues include D12 and G39. Residues 12–15 (DEGK), 37–40 (NAGH), T134, R148, N230, T245, and R309 contribute to the IMP site. Residue H40 is the Proton donor of the active site. 305–311 (VTTGRKR) contacts substrate. GTP contacts are provided by residues R311, 337–339 (KLD), and 419–421 (GTG).

The protein belongs to the adenylosuccinate synthetase family. In terms of assembly, homodimer. Mg(2+) serves as cofactor.

Its subcellular location is the cytoplasm. It catalyses the reaction IMP + L-aspartate + GTP = N(6)-(1,2-dicarboxyethyl)-AMP + GDP + phosphate + 2 H(+). It participates in purine metabolism; AMP biosynthesis via de novo pathway; AMP from IMP: step 1/2. Plays an important role in the de novo pathway and in the salvage pathway of purine nucleotide biosynthesis. Catalyzes the first committed step in the biosynthesis of AMP from IMP. The protein is Adenylosuccinate synthetase of Saccharomyces cerevisiae (strain JAY291) (Baker's yeast).